Consider the following 222-residue polypeptide: Glutathione-specific gamma-glutamylcyclotransferase 1 (222 aa).

The span at 1-22 (MKQESAAPNTPPTSQSPTPSAQ) shows a compositional bias: low complexity. The interval 1 to 24 (MKQESAAPNTPPTSQSPTPSAQFP) is disordered. 35-40 (IFGYGS) serves as a coordination point for substrate. Glutamate 115 (proton acceptor) is an active-site residue.

This sequence belongs to the gamma-glutamylcyclotransferase family. ChaC subfamily. Interacts with NOTCH1 (via extracellular region).

The protein localises to the cytoplasm. Its subcellular location is the cytosol. It localises to the golgi apparatus. It is found in the trans-Golgi network. It catalyses the reaction glutathione = L-cysteinylglycine + 5-oxo-L-proline. Its function is as follows. Catalyzes the cleavage of glutathione into 5-oxo-L-proline and a Cys-Gly dipeptide. Acts specifically on glutathione, but not on other gamma-glutamyl peptides. Glutathione depletion is an important factor for apoptosis initiation and execution. Acts as a pro-apoptotic component of the unfolded protein response pathway by mediating the pro-apoptotic effects of the ATF4-ATF3-DDIT3/CHOP cascade. Negative regulator of Notch signaling pathway involved in embryonic neurogenesis: acts by inhibiting Notch cleavage by furin, maintaining Notch in an immature inactive form, thereby promoting neurogenesis in embryos. This chain is Glutathione-specific gamma-glutamylcyclotransferase 1, found in Homo sapiens (Human).